The sequence spans 601 residues: AT-rich interactive domain-containing protein 3A (601 aa).

The tract at residues 1–224 (MKLQAVMETL…HMASQMPPPD (224 aa)) is disordered. Positions 60–89 (MAALAAMRAAAAGLGHPSSPGGSEDGPPIS) are enriched in low complexity. 3 positions are modified to phosphoserine: S78, S82, and S89. T99 bears the Phosphothreonine mark. The residue at position 102 (S102) is a Phosphoserine. A compositionally biased stretch (basic and acidic residues) spans 114 to 123 (GHAEGDRHLM). S127 is subject to Phosphoserine. The acidic stretch occupies residues 128–165 (DDDDTKSKWEEQELEELGEEEEEEEEEDDFEEEEEEEE). The span at 139-166 (QELEELGEEEEEEEEEDDFEEEEEEEEG) shows a compositional bias: acidic residues. Positions 243–335 (DPKRKEFLDD…YLYPYECERR (93 aa)) constitute an ARID domain. S358 and S367 each carry phosphoserine. Residues K403, K404, K457, and K467 each participate in a glycyl lysine isopeptide (Lys-Gly) (interchain with G-Cter in SUMO2) cross-link. Residues 449-546 (AALEQLREKL…GVLFAQPPPP (98 aa)) form the REKLES domain. The tract at residues 450–493 (ALEQLREKLESTEPPEKKMALVADEQQRLMQRAVQQSFLAMTAQ) is important for nuclear localization. Residues 495 to 518 (PMNIRINSQASESRQDSAVSLTSA) form a homodimerization region. The segment at 542–562 (QPPPPTAPSAPGKGGVSSIGT) is important for cytoplasmic localization. The segment at 545 to 601 (PPTAPSAPGKGGVSSIGTNTTTGSRTGASGSTVSGGQVGLPGVSTPTMSSTSNNSLP) is disordered. Composition is skewed to low complexity over residues 559 to 579 (SIGT…TVSG) and 588 to 601 (STPT…NSLP).

As to quaternary structure, homodimer. Heterodimer with ARID3B. Interacts with E2F1. Interacts with GTF2I and BTK. In terms of tissue distribution, B-cell specific in the adult. Expressed in B-cell progenitors, down-regulated in the immature B-cell stage, and is up-regulated again at later stages of B-lymphocyte differentiation.

It is found in the nucleus. Its subcellular location is the cytoplasm. Its function is as follows. Transcription factor involved in B-cell differentiation. Binds a VH promoter proximal site necessary for induced mu-heavy-chain transcription. Binds the minor groove of a restricted ATC sequence that is sufficient for nuclear matrix association. This sequence motif is present in matrix-associating regions (MARS) proximal to the promoter and flanking E mu. Activates E mu-driven transcription by binding these sites. May be involved in the control of cell cycle progression by the RB1/E2F1 pathway. This Mus musculus (Mouse) protein is AT-rich interactive domain-containing protein 3A (Arid3a).